We begin with the raw amino-acid sequence, 422 residues long: Imidazolonepropionase (422 aa).

Residues His82 and His84 each contribute to the Fe(3+) site. Zn(2+) contacts are provided by His82 and His84. 4-imidazolone-5-propanoate-binding residues include Arg91, Tyr154, and His187. Tyr154 is an N-formimidoyl-L-glutamate binding site. His252 serves as a coordination point for Fe(3+). Residue His252 participates in Zn(2+) binding. A 4-imidazolone-5-propanoate-binding site is contributed by Glu255. Residue Asp327 coordinates Fe(3+). Asp327 contributes to the Zn(2+) binding site. Asn329 and Gly331 together coordinate N-formimidoyl-L-glutamate. Position 332 (Ser332) interacts with 4-imidazolone-5-propanoate.

It belongs to the metallo-dependent hydrolases superfamily. HutI family. Requires Zn(2+) as cofactor. It depends on Fe(3+) as a cofactor.

The protein localises to the cytoplasm. The enzyme catalyses 4-imidazolone-5-propanoate + H2O = N-formimidoyl-L-glutamate. It participates in amino-acid degradation; L-histidine degradation into L-glutamate; N-formimidoyl-L-glutamate from L-histidine: step 3/3. In terms of biological role, catalyzes the hydrolytic cleavage of the carbon-nitrogen bond in imidazolone-5-propanoate to yield N-formimidoyl-L-glutamate. It is the third step in the universal histidine degradation pathway. The polypeptide is Imidazolonepropionase (Alkaliphilus metalliredigens (strain QYMF)).